The chain runs to 224 residues: MTANQIAYQKHLETARVNAVGEMQRGLELDESRRHNISQEQLKTRELTELERSNRAVEKETSRHNVVTETETRRSNLAREWETYRSNSAREMETQRSNISYEAIKRGQLALDRAELNESIRATNENLALQYSKLQTESLLTQRGQDLQHKNAIIGASANAFGSLLGYSTASADRASREEIASANRKSQEHIASMQVLGSMANTMFSSVSNLVGKTAGAFAGGLS.

The stretch at 108–137 (QLALDRAELNESIRATNENLALQYSKLQTE) forms a coiled coil.

This is an uncharacterized protein from Human picobirnavirus (strain Human/Thailand/Hy005102/-) (PBV).